Reading from the N-terminus, the 152-residue chain is Sulfur-rich protein (152 aa).

The tract at residues 1 to 20 (MSTVPVVQGAGSSNSAQDIS) is disordered. 2 helical membrane-spanning segments follow: residues 43–63 (VGLV…LVSA) and 69–89 (AIYL…VGIL).

The protein localises to the membrane. The protein is Sulfur-rich protein (srp) of Chlamydia trachomatis serovar A (strain ATCC VR-571B / DSM 19440 / HAR-13).